We begin with the raw amino-acid sequence, 172 residues long: NADH-ubiquinone oxidoreductase chain 6 (172 aa).

6 consecutive transmembrane segments (helical) span residues 1-21, 25-45, 48-68, 86-106, 108-128, and 141-161; these read MLSLVLCFFVMFLLGVAVVVL, PYFSALGLVFVAVSGCFIVLY, GTFLSLVLVLLYLGGMMVVFV, VIWFFVICVLCICFAGYMSFN, FFLDVSVACEGADYTGGIFGA, and LILVLAGWALLVCLFSVLVVV.

This sequence belongs to the complex I subunit 6 family.

The protein localises to the mitochondrion membrane. The catalysed reaction is a ubiquinone + NADH + 5 H(+)(in) = a ubiquinol + NAD(+) + 4 H(+)(out). Its function is as follows. Core subunit of the mitochondrial membrane respiratory chain NADH dehydrogenase (Complex I) that is believed to belong to the minimal assembly required for catalysis. Complex I functions in the transfer of electrons from NADH to the respiratory chain. The immediate electron acceptor for the enzyme is believed to be ubiquinone. The protein is NADH-ubiquinone oxidoreductase chain 6 (MT-ND6) of Petromyzon marinus (Sea lamprey).